The sequence spans 222 residues: Iodotyrosine deiodinase (222 aa).

FMN contacts are provided by residues 34-38 (RRTVR) and 61-62 (PS). 3-iodo-L-tyrosine is bound by residues glutamate 91, tyrosine 95, and lysine 116. FMN-binding positions include 171–173 (THT) and arginine 212.

It belongs to the nitroreductase family. As to quaternary structure, homodimer. FMN serves as cofactor.

The catalysed reaction is 2 iodide + L-tyrosine + 2 NADP(+) = 3,5-diiodo-L-tyrosine + 2 NADPH + H(+). The enzyme catalyses iodide + L-tyrosine + NADP(+) = 3-iodo-L-tyrosine + NADPH. It catalyses the reaction 3-iodo-L-tyrosine + iodide + NADP(+) = 3,5-diiodo-L-tyrosine + NADPH + H(+). It carries out the reaction L-tyrosine + chloride + NADP(+) = 3-chloro-L-tyrosine + NADPH. The catalysed reaction is bromide + L-tyrosine + NADP(+) = 3-bromo-L-tyrosine + NADPH. In terms of biological role, catalyzes the dehalogenation of halotyrosines such as 3-iodo-L-tyrosine and 3,5-diiodo-L-tyrosine. Likely to also catalyze the dehalogenation of other halotyrosines such as 3-bromo-L-tyrosine, 3-chloro-L-tyrosine and 3-iodo-L-tyrosine. Activity towards 3-iodo-L-tyrosine is much stronger than activity towards 3,5-diiodo-L-tyrosine and 2-iodophenol. This Haliscomenobacter hydrossis (strain ATCC 27775 / DSM 1100 / LMG 10767 / O) protein is Iodotyrosine deiodinase.